A 1703-amino-acid chain; its full sequence is Pecanex-like protein 1 (1703 aa).

2 helical membrane-spanning segments follow: residues 31 to 53 (VNAL…YMAL) and 57 to 74 (MVIV…FLLL). Residues 91–100 (VEHQTRESKG) show a composition bias toward basic and acidic residues. The segment at 91–126 (VEHQTRESKGSRGGTGGANDPVTRREDSNGLGDPGG) is disordered. A glycan (N-linked (GlcNAc...) asparagine) is linked at Asn-256. 3 consecutive transmembrane segments (helical) span residues 416-438 (VLAV…HGFF), 477-499 (AYSR…YGSL), and 525-547 (LVIV…QVNT). Asn-564 carries N-linked (GlcNAc...) asparagine glycosylation. Transmembrane regions (helical) follow at residues 569-591 (LLSA…CFCY), 603-622 (IPVL…YHLS), 675-697 (LIVC…FIAL), and 704-721 (VLYG…YLLP). N-linked (GlcNAc...) asparagine glycosylation is found at Asn-988, Asn-1129, and Asn-1391. 2 disordered regions span residues 1475 to 1556 (VQSG…HSIP) and 1577 to 1598 (TDPL…PTHA). Low complexity-rich tracts occupy residues 1485–1510 (ARAS…RTST) and 1518–1556 (RSST…HSIP). The segment covering 1582–1591 (QHHHPHHHPQ) has biased composition (basic residues). N-linked (GlcNAc...) asparagine glycosylation occurs at Asn-1622.

It belongs to the pecanex family.

The protein localises to the membrane. This chain is Pecanex-like protein 1, found in Takifugu rubripes (Japanese pufferfish).